The following is a 397-amino-acid chain: Tryptophan synthase beta chain (397 aa).

Lys86 carries the N6-(pyridoxal phosphate)lysine modification.

Belongs to the TrpB family. In terms of assembly, tetramer of two alpha and two beta chains. Requires pyridoxal 5'-phosphate as cofactor.

The enzyme catalyses (1S,2R)-1-C-(indol-3-yl)glycerol 3-phosphate + L-serine = D-glyceraldehyde 3-phosphate + L-tryptophan + H2O. Its pathway is amino-acid biosynthesis; L-tryptophan biosynthesis; L-tryptophan from chorismate: step 5/5. In terms of biological role, the beta subunit is responsible for the synthesis of L-tryptophan from indole and L-serine. The chain is Tryptophan synthase beta chain from Aeromonas hydrophila subsp. hydrophila (strain ATCC 7966 / DSM 30187 / BCRC 13018 / CCUG 14551 / JCM 1027 / KCTC 2358 / NCIMB 9240 / NCTC 8049).